The chain runs to 664 residues: UV-stimulated scaffold protein A homolog (664 aa).

The segment at 10–153 (KVIGLIEKAT…LKNTLKLKFP (144 aa)) is VHS-like. The stretch at 148–180 (LKLKFPDLQANAARIQRERQEREMKTKEILRNK) forms a coiled coil. Disordered stretches follow at residues 330 to 350 (HGNE…DGKV) and 362 to 403 (MRTQ…GNSL). A compositionally biased stretch (acidic residues) spans 334–347 (ETNEEEEDIWEEDD). Residues 363–374 (RTQQSENSSLPS) are compositionally biased toward polar residues. Basic and acidic residues predominate over residues 377 to 387 (EAKKSTSEARS). The span at 388 to 402 (NKVSNTKKVGSSGNS) shows a compositional bias: polar residues. Residues 473–500 (TPPCRASLKKGGLCQRRDLRVCPFHGPI) form a UVSSA-type zinc finger. Residues C476, C486, C494, and H497 each coordinate Zn(2+). Disordered stretches follow at residues 514–546 (SPLD…DPNQ) and 640–664 (VKGT…ANQW). 2 stretches are compositionally biased toward polar residues: residues 521-533 (NQTS…NQDV) and 640-650 (VKGTNPQQLAQ).

Belongs to the UVSSA family.

It is found in the chromosome. This chain is UV-stimulated scaffold protein A homolog, found in Arabidopsis thaliana (Mouse-ear cress).